Reading from the N-terminus, the 1162-residue chain is Carbamoyl phosphate synthase large chain (1162 aa).

Residues 1–456 (MPKRTDIKSI…SLQKALRGLE (456 aa)) form a carboxyphosphate synthetic domain region. ATP contacts are provided by Arg129, Arg222, Gly228, Gly229, Glu261, Val263, Glu268, Gly294, Val295, His296, Gln338, and Glu352. The ATP-grasp 1 domain maps to 186–381 (ETEWQLGEVE…IAKVAAKLAV (196 aa)). Mg(2+)-binding residues include Gln338, Glu352, and Asn354. Positions 338, 352, and 354 each coordinate Mn(2+). Residues 457 to 613 (TGLTGFDEIA…PFVGQPRSEA (157 aa)) form an oligomerization domain region. Residues 614–1025 (EVSDRKKVVI…AFAKAQLGAG (412 aa)) are carbamoyl phosphate synthetic domain. In terms of domain architecture, ATP-grasp 2 spans 742-954 (QKLLIKLDLN…IAKVAARIMA (213 aa)). Arg778, Thr838, Leu840, Glu845, Gly870, Ile871, His872, Ser873, Gln913, and Glu925 together coordinate ATP. 3 residues coordinate Mg(2+): Gln913, Glu925, and Asn927. Mn(2+) contacts are provided by Gln913, Glu925, and Asn927. The region spanning 1026 to 1162 (VELPREGTVF…VRPLQDYFRS (137 aa)) is the MGS-like domain. The interval 1026 to 1162 (VELPREGTVF…VRPLQDYFRS (137 aa)) is allosteric domain.

It belongs to the CarB family. In terms of assembly, composed of two chains; the small (or glutamine) chain promotes the hydrolysis of glutamine to ammonia, which is used by the large (or ammonia) chain to synthesize carbamoyl phosphate. Tetramer of heterodimers (alpha,beta)4. The cofactor is Mg(2+). Mn(2+) is required as a cofactor.

It catalyses the reaction hydrogencarbonate + L-glutamine + 2 ATP + H2O = carbamoyl phosphate + L-glutamate + 2 ADP + phosphate + 2 H(+). The enzyme catalyses hydrogencarbonate + NH4(+) + 2 ATP = carbamoyl phosphate + 2 ADP + phosphate + 2 H(+). Its pathway is amino-acid biosynthesis; L-arginine biosynthesis; carbamoyl phosphate from bicarbonate: step 1/1. The protein operates within pyrimidine metabolism; UMP biosynthesis via de novo pathway; (S)-dihydroorotate from bicarbonate: step 1/3. Functionally, large subunit of the glutamine-dependent carbamoyl phosphate synthetase (CPSase). CPSase catalyzes the formation of carbamoyl phosphate from the ammonia moiety of glutamine, carbonate, and phosphate donated by ATP, constituting the first step of 2 biosynthetic pathways, one leading to arginine and/or urea and the other to pyrimidine nucleotides. The large subunit (synthetase) binds the substrates ammonia (free or transferred from glutamine from the small subunit), hydrogencarbonate and ATP and carries out an ATP-coupled ligase reaction, activating hydrogencarbonate by forming carboxy phosphate which reacts with ammonia to form carbamoyl phosphate. This Brucella suis biovar 1 (strain 1330) protein is Carbamoyl phosphate synthase large chain.